The chain runs to 780 residues: Acyl-CoA dehydrogenase family member 11 (780 aa).

Residue Lys-177 is modified to N6-acetyllysine. Tyr-324 bears the Phosphotyrosine mark. Lys-391 carries the N6-succinyllysine modification. Residues 504 to 514 and 538 to 540 each bind FAD; these read FCMTEPDVASS and WSS. Ser-514 serves as a coordination point for substrate. Residue 629–632 participates in substrate binding; the sequence is GPGR. FAD-binding positions include Arg-657, Gln-727, and 727–731; that span reads QVCGG. Residue Gly-755 participates in substrate binding. Residue 756 to 758 coordinates FAD; sequence PDE.

The protein belongs to the acyl-CoA dehydrogenase family. In terms of assembly, homodimer. Requires FAD as cofactor. In terms of tissue distribution, widely expressed with highest levels in brain followed by liver, heart and kidney.

The protein resides in the peroxisome. It is found in the mitochondrion membrane. It catalyses the reaction a 2,3-saturated acyl-CoA + oxidized [electron-transfer flavoprotein] + H(+) = a (2E)-enoyl-CoA + reduced [electron-transfer flavoprotein]. The enzyme catalyses docosanoyl-CoA + oxidized [electron-transfer flavoprotein] + H(+) = (2E)-docosenoyl-CoA + reduced [electron-transfer flavoprotein]. The catalysed reaction is tetracosanoyl-CoA + oxidized [electron-transfer flavoprotein] + H(+) = (2E)-tetracosenoyl-CoA + reduced [electron-transfer flavoprotein]. It carries out the reaction eicosanoyl-CoA + oxidized [electron-transfer flavoprotein] + H(+) = (2E)-eicosenoyl-CoA + reduced [electron-transfer flavoprotein]. It catalyses the reaction hexacosanoyl-CoA + oxidized [electron-transfer flavoprotein] + H(+) = (2E)-hexacosenoyl-CoA + reduced [electron-transfer flavoprotein]. The enzyme catalyses tricosanoyl-CoA + oxidized [electron-transfer flavoprotein] + H(+) = (2E)-tricosenoyl-CoA + reduced [electron-transfer flavoprotein]. It functions in the pathway lipid metabolism; fatty acid beta-oxidation. Acyl-CoA dehydrogenase, that exhibits maximal activity towards saturated C22-CoA. Probably participates in beta-oxydation and energy production but could also play a role in the metabolism of specific fatty acids to control fatty acids composition of cellular lipids in brain. This Homo sapiens (Human) protein is Acyl-CoA dehydrogenase family member 11 (ACAD11).